The following is an 808-amino-acid chain: Auxin response factor 4 (808 aa).

Pro residues predominate over residues methionine 1–glutamine 13. A disordered region spans residues methionine 1–proline 20. The segment at residues phenylalanine 129–methionine 231 is a DNA-binding region (TF-B3). The segment covering proline 342 to serine 352 has biased composition (basic and acidic residues). Disordered regions lie at residues proline 342 to valine 433, threonine 661 to threonine 691, and glutamine 778 to asparagine 808. Residues alanine 402–aspartate 432 are compositionally biased toward polar residues. The region spanning arginine 692–asparagine 785 is the PB1 domain. The span at proline 787–histidine 799 shows a compositional bias: basic and acidic residues.

This sequence belongs to the ARF family. Homodimers and heterodimers. As to expression, expressed in roots, culms, leaves and young panicles.

The protein localises to the nucleus. Its function is as follows. Auxin response factors (ARFs) are transcriptional factors that bind specifically to the DNA sequence 5'-TGTCTC-3' found in the auxin-responsive promoter elements (AuxREs). This is Auxin response factor 4 (ARF4) from Oryza sativa subsp. japonica (Rice).